We begin with the raw amino-acid sequence, 394 residues long: Xylose isomerase (394 aa).

Active-site residues include histidine 54 and aspartate 57. Positions 180, 216, 219, 244, 254, 256, and 285 each coordinate Mg(2+). Positions 370–394 (VRTPRPAGDGPPAGRARLTVAPRKR) are disordered. The span at 373–386 (PRPAGDGPPAGRAR) shows a compositional bias: low complexity.

Belongs to the xylose isomerase family. In terms of assembly, homotetramer. Requires Mg(2+) as cofactor.

It is found in the cytoplasm. It carries out the reaction alpha-D-xylose = alpha-D-xylulofuranose. In terms of biological role, involved in D-xylose catabolism. This chain is Xylose isomerase (xylA), found in Streptomyces rochei (Streptomyces parvullus).